The following is a 294-amino-acid chain: NAD kinase (294 aa).

The Proton acceptor role is filled by aspartate 74. NAD(+)-binding positions include 74-75 (DG), 148-149 (NE), histidine 159, arginine 176, aspartate 178, 189-194 (TAYSLS), and glutamine 249.

Belongs to the NAD kinase family. Requires a divalent metal cation as cofactor.

The protein resides in the cytoplasm. It carries out the reaction NAD(+) + ATP = ADP + NADP(+) + H(+). Functionally, involved in the regulation of the intracellular balance of NAD and NADP, and is a key enzyme in the biosynthesis of NADP. Catalyzes specifically the phosphorylation on 2'-hydroxyl of the adenosine moiety of NAD to yield NADP. The protein is NAD kinase of Vibrio atlanticus (strain LGP32) (Vibrio splendidus (strain Mel32)).